Reading from the N-terminus, the 347-residue chain is Doublecortin domain-containing protein 2C (347 aa).

Doublecortin domains follow at residues 16 to 98 (KTIL…LDYI) and 136 to 217 (RYIN…IPYW). The interval 235 to 260 (KYTQTKKRVESKVKEPLQNDSVPPRS) is disordered. A compositionally biased stretch (basic and acidic residues) spans 241 to 251 (KRVESKVKEPL).

It localises to the cell projection. Its subcellular location is the cilium. The protein localises to the flagellum. It is found in the cytoplasm. The chain is Doublecortin domain-containing protein 2C from Mus musculus (Mouse).